A 270-amino-acid chain; its full sequence is NAD(P)H-hydrate epimerase (270 aa).

One can recognise a YjeF N-terminal domain in the interval 25–234 (FQQLMDLMQN…DLLAPEAIYQ (210 aa)). 73 to 77 (DNGGQ) contributes to the (6S)-NADPHX binding site. K(+) contacts are provided by Asn74 and Asp144. (6S)-NADPHX is bound by residues 148-154 (GVGLYGH) and Glu177. Thr180 lines the K(+) pocket.

Belongs to the NnrE/AIBP family. It depends on K(+) as a cofactor.

The enzyme catalyses (6R)-NADHX = (6S)-NADHX. It carries out the reaction (6R)-NADPHX = (6S)-NADPHX. In terms of biological role, catalyzes the epimerization of the S- and R-forms of NAD(P)HX, a damaged form of NAD(P)H that is a result of enzymatic or heat-dependent hydration. This is a prerequisite for the S-specific NAD(P)H-hydrate dehydratase to allow the repair of both epimers of NAD(P)HX. This chain is NAD(P)H-hydrate epimerase, found in Legionella pneumophila subsp. pneumophila (strain Philadelphia 1 / ATCC 33152 / DSM 7513).